Reading from the N-terminus, the 329-residue chain is Quinone oxidoreductase (329 aa).

Ala-2 bears the N-acetylalanine mark. Lys-23 carries the N6-acetyllysine modification. Residues Tyr-53, 158–161, Gly-181, His-200, Asn-229, 246–249, and 269–271 each bind NADP(+); these read SGGV, VGSR, and VTL. Phosphoserine is present on Ser-248. Lys-296 carries the post-translational modification N6-succinyllysine.

This sequence belongs to the zinc-containing alcohol dehydrogenase family. Quinone oxidoreductase subfamily. Homotetramer. As to expression, only very low amounts in the lens.

Its subcellular location is the cytoplasm. It carries out the reaction 2 a quinone + NADPH + H(+) = 2 a 1,4-benzosemiquinone + NADP(+). Does not have alcohol dehydrogenase activity. Binds NADP and acts through a one-electron transfer process. Orthoquinones, such as 1,2-naphthoquinone or 9,10-phenanthrenequinone, are the best substrates (in vitro). May act in the detoxification of xenobiotics. Interacts with (AU)-rich elements (ARE) in the 3'-UTR of target mRNA species. Enhances the stability of mRNA coding for BCL2. NADPH binding interferes with mRNA binding. The polypeptide is Quinone oxidoreductase (CRYZ) (Homo sapiens (Human)).